The chain runs to 89 residues: Small ribosomal subunit protein uS15 (89 aa).

This sequence belongs to the universal ribosomal protein uS15 family. Part of the 30S ribosomal subunit. Forms a bridge to the 50S subunit in the 70S ribosome, contacting the 23S rRNA.

One of the primary rRNA binding proteins, it binds directly to 16S rRNA where it helps nucleate assembly of the platform of the 30S subunit by binding and bridging several RNA helices of the 16S rRNA. In terms of biological role, forms an intersubunit bridge (bridge B4) with the 23S rRNA of the 50S subunit in the ribosome. The chain is Small ribosomal subunit protein uS15 from Phocaeicola vulgatus (strain ATCC 8482 / DSM 1447 / JCM 5826 / CCUG 4940 / NBRC 14291 / NCTC 11154) (Bacteroides vulgatus).